Consider the following 154-residue polypeptide: 17.0 kDa class II heat shock protein (154 aa).

The 116-residue stretch at 39-154 (DARAMAATPA…KPKTIEIKVA (116 aa)) folds into the sHSP domain.

Belongs to the small heat shock protein (HSP20) family.

The protein resides in the cytoplasm. The chain is 17.0 kDa class II heat shock protein (HSP18) from Zea mays (Maize).